The sequence spans 491 residues: UDP-N-acetylmuramate--L-alanine ligase (491 aa).

126–132 (GTHGKTT) contacts ATP.

The protein belongs to the MurCDEF family.

The protein localises to the cytoplasm. It catalyses the reaction UDP-N-acetyl-alpha-D-muramate + L-alanine + ATP = UDP-N-acetyl-alpha-D-muramoyl-L-alanine + ADP + phosphate + H(+). The protein operates within cell wall biogenesis; peptidoglycan biosynthesis. Functionally, cell wall formation. The protein is UDP-N-acetylmuramate--L-alanine ligase of Klebsiella pneumoniae (strain 342).